The following is a 152-amino-acid chain: Small ribosomal subunit protein bS6 (152 aa).

Belongs to the bacterial ribosomal protein bS6 family.

Functionally, binds together with bS18 to 16S ribosomal RNA. The chain is Small ribosomal subunit protein bS6 from Bdellovibrio bacteriovorus (strain ATCC 15356 / DSM 50701 / NCIMB 9529 / HD100).